A 169-amino-acid chain; its full sequence is Neurotensin/neuromedin N (169 aa).

The signal sequence occupies residues M1 to C22.

The protein belongs to the neurotensin family. Interacts with NTSR1. Interacts with SORT1. Interacts with SORL1. Post-translationally, neurotensin is cleaved and degraded by Angiotensin-converting enzyme (ACE) and neprilysin (MME).

The protein resides in the secreted. The protein localises to the cytoplasmic vesicle. It localises to the secretory vesicle. Functionally, neurotensin may play an endocrine or paracrine role in the regulation of fat metabolism. It causes contraction of smooth muscle. The polypeptide is Neurotensin/neuromedin N (Nts) (Rattus norvegicus (Rat)).